Consider the following 259-residue polypeptide: 3-oxo-5-alpha-steroid 4-dehydrogenase 1 (259 aa).

Helical transmembrane passes span 12–29 (LLAA…AVFA), 86–106 (ILLA…PFLM), 111–131 (PMPL…GYLQ), 151–171 (FLIG…SDHI), and 209–229 (YALA…FCFL).

This sequence belongs to the steroid 5-alpha reductase family. Liver and prostate (at a low level).

It localises to the microsome membrane. The protein localises to the endoplasmic reticulum membrane. It catalyses the reaction a 3-oxo-5alpha-steroid + NADP(+) = a 3-oxo-Delta(4)-steroid + NADPH + H(+). It carries out the reaction androst-4-ene-3,17-dione + NADPH + H(+) = 5alpha-androstan-3,17-dione + NADP(+). The catalysed reaction is 5alpha-pregnane-3,20-dione + NADP(+) = progesterone + NADPH + H(+). The enzyme catalyses 17beta-hydroxy-5alpha-androstan-3-one + NADP(+) = testosterone + NADPH + H(+). In terms of biological role, converts testosterone into 5-alpha-dihydrotestosterone and progesterone or corticosterone into their corresponding 5-alpha-3-oxosteroids. It plays a central role in sexual differentiation and androgen physiology. In Homo sapiens (Human), this protein is 3-oxo-5-alpha-steroid 4-dehydrogenase 1.